We begin with the raw amino-acid sequence, 290 residues long: NAD kinase (290 aa).

Aspartate 72 serves as the catalytic Proton acceptor. Residues aspartate 72–glycine 73, lysine 77, asparagine 145–glutamate 146, aspartate 175, threonine 186–serine 191, and alanine 210 each bind NAD(+).

Belongs to the NAD kinase family. Requires a divalent metal cation as cofactor.

The protein resides in the cytoplasm. The catalysed reaction is NAD(+) + ATP = ADP + NADP(+) + H(+). Its function is as follows. Involved in the regulation of the intracellular balance of NAD and NADP, and is a key enzyme in the biosynthesis of NADP. Catalyzes specifically the phosphorylation on 2'-hydroxyl of the adenosine moiety of NAD to yield NADP. In Bacteroides fragilis (strain YCH46), this protein is NAD kinase.